The primary structure comprises 92 residues: Small ribosomal subunit protein uS19c (92 aa).

This sequence belongs to the universal ribosomal protein uS19 family.

It localises to the plastid. The protein resides in the chloroplast. In terms of biological role, protein S19 forms a complex with S13 that binds strongly to the 16S ribosomal RNA. The protein is Small ribosomal subunit protein uS19c of Lactuca sativa (Garden lettuce).